The sequence spans 344 residues: Pre-mRNA polyadenylation factor fip1 (344 aa).

2 disordered regions span residues Met1–Ala99 and Asn230–Tyr344. Residues Val28 to Gln38 are compositionally biased toward polar residues. The span at Ala39–Phe50 shows a compositional bias: acidic residues. Positions Gln80 to Glu92 are enriched in basic and acidic residues. Over residues Ser243–Ser258 the composition is skewed to low complexity. Residues Asn271–Ala301 are compositionally biased toward polar residues. Positions Ser302–Ser317 are enriched in low complexity.

Belongs to the FIP1 family.

Its subcellular location is the nucleus. Its function is as follows. Pre-mRNA polyadenylation factor that directly interacts with poly(A) polymerase. This chain is Pre-mRNA polyadenylation factor fip1, found in Schizosaccharomyces pombe (strain 972 / ATCC 24843) (Fission yeast).